The primary structure comprises 289 residues: ATP synthase gamma chain (289 aa).

It belongs to the ATPase gamma chain family. F-type ATPases have 2 components, CF(1) - the catalytic core - and CF(0) - the membrane proton channel. CF(1) has five subunits: alpha(3), beta(3), gamma(1), delta(1), epsilon(1). CF(0) has three main subunits: a, b and c.

The protein resides in the cell membrane. Functionally, produces ATP from ADP in the presence of a proton gradient across the membrane. The gamma chain is believed to be important in regulating ATPase activity and the flow of protons through the CF(0) complex. In Buchnera aphidicola subsp. Melaphis rhois, this protein is ATP synthase gamma chain.